The following is a 472-amino-acid chain: NADH-quinone oxidoreductase subunit N (472 aa).

A run of 14 helical transmembrane segments spans residues A11–A31, I43–G63, S67–L87, G103–G123, F125–F145, F159–G179, V200–H220, V234–L254, W265–I285, F293–T313, A318–I338, P362–F384, L401–V421, and L446–L466.

It belongs to the complex I subunit 2 family. As to quaternary structure, NDH-1 is composed of 14 different subunits. Subunits NuoA, H, J, K, L, M, N constitute the membrane sector of the complex.

Its subcellular location is the cell inner membrane. The enzyme catalyses a quinone + NADH + 5 H(+)(in) = a quinol + NAD(+) + 4 H(+)(out). In terms of biological role, NDH-1 shuttles electrons from NADH, via FMN and iron-sulfur (Fe-S) centers, to quinones in the respiratory chain. The immediate electron acceptor for the enzyme in this species is believed to be a menaquinone. Couples the redox reaction to proton translocation (for every two electrons transferred, four hydrogen ions are translocated across the cytoplasmic membrane), and thus conserves the redox energy in a proton gradient. The protein is NADH-quinone oxidoreductase subunit N of Phocaeicola vulgatus (strain ATCC 8482 / DSM 1447 / JCM 5826 / CCUG 4940 / NBRC 14291 / NCTC 11154) (Bacteroides vulgatus).